The chain runs to 371 residues: N-methyl-L-tryptophan oxidase (371 aa).

4 to 34 provides a ligand contact to FAD; it reads DLIVIGSGSVGSAAGYYASQAGLNVLMIDSA. Cysteine 307 carries the post-translational modification S-8alpha-FAD cysteine.

The protein belongs to the MSOX/MTOX family. MTOX subfamily. Monomer. FAD is required as a cofactor.

It carries out the reaction N(alpha)-methyl-L-tryptophan + O2 + H2O = L-tryptophan + formaldehyde + H2O2. Functionally, catalyzes the oxidative demethylation of N-methyl-L-tryptophan. In Yersinia pseudotuberculosis serotype O:1b (strain IP 31758), this protein is N-methyl-L-tryptophan oxidase.